The chain runs to 376 residues: Phospho-N-acetylmuramoyl-pentapeptide-transferase (376 aa).

A run of 10 helical transmembrane segments spans residues 28-48 (RTIMATITAMVLTFVLAPWFI), 76-96 (TMGGALILLSLLLPTVLWADL), 100-120 (FVLATTAVTAGYGVIGYLDDF), 135-155 (YKLIGQVLIGGAAVAYTFLLA), 179-199 (YPIELPLYVYIPFAVFVVVAT), 211-231 (GLAIGPVIINAGTYLILAYIV), 252-272 (AGELSVYCGSVIGAGIGFLWY), 279-299 (VFMGDVGSLALGGGLGMLAVF), 307-327 (IILGGIFFIETVSVITQVLSF), and 353-373 (KIIVRFWIISILLALVSLASM).

It belongs to the glycosyltransferase 4 family. MraY subfamily. Requires Mg(2+) as cofactor.

It localises to the cell inner membrane. The enzyme catalyses UDP-N-acetyl-alpha-D-muramoyl-L-alanyl-gamma-D-glutamyl-meso-2,6-diaminopimeloyl-D-alanyl-D-alanine + di-trans,octa-cis-undecaprenyl phosphate = di-trans,octa-cis-undecaprenyl diphospho-N-acetyl-alpha-D-muramoyl-L-alanyl-D-glutamyl-meso-2,6-diaminopimeloyl-D-alanyl-D-alanine + UMP. It participates in cell wall biogenesis; peptidoglycan biosynthesis. Its function is as follows. Catalyzes the initial step of the lipid cycle reactions in the biosynthesis of the cell wall peptidoglycan: transfers peptidoglycan precursor phospho-MurNAc-pentapeptide from UDP-MurNAc-pentapeptide onto the lipid carrier undecaprenyl phosphate, yielding undecaprenyl-pyrophosphoryl-MurNAc-pentapeptide, known as lipid I. The polypeptide is Phospho-N-acetylmuramoyl-pentapeptide-transferase (Sorangium cellulosum (strain So ce56) (Polyangium cellulosum (strain So ce56))).